An 83-amino-acid polypeptide reads, in one-letter code: RNA-binding protein Hfq (83 aa).

Residues 9–68 (DPYLNALRKERIPVSIFLVNGIKLQGQIESFDQFVILLKNTVSQMVYKHAISTVVPARNV) enclose the Sm domain.

This sequence belongs to the Hfq family. As to quaternary structure, homohexamer.

Its function is as follows. RNA chaperone that binds small regulatory RNA (sRNAs) and mRNAs to facilitate mRNA translational regulation in response to envelope stress, environmental stress and changes in metabolite concentrations. Also binds with high specificity to tRNAs. The sequence is that of RNA-binding protein Hfq from Hahella chejuensis (strain KCTC 2396).